A 314-amino-acid polypeptide reads, in one-letter code: Protoheme IX farnesyltransferase (314 aa).

7 consecutive transmembrane segments (helical) span residues 58-78 (LWLV…ASVF), 107-127 (AALV…YVWV), 130-150 (LSAA…TMLL), 173-193 (WTAV…VVFF), 227-247 (VGRQ…LLWP), 248-268 (VAGT…VFLL), and 294-314 (SSNL…LLAG).

Belongs to the UbiA prenyltransferase family. Protoheme IX farnesyltransferase subfamily.

It is found in the cell membrane. It catalyses the reaction heme b + (2E,6E)-farnesyl diphosphate + H2O = Fe(II)-heme o + diphosphate. Its pathway is porphyrin-containing compound metabolism; heme O biosynthesis; heme O from protoheme: step 1/1. Its function is as follows. Converts heme B (protoheme IX) to heme O by substitution of the vinyl group on carbon 2 of heme B porphyrin ring with a hydroxyethyl farnesyl side group. The polypeptide is Protoheme IX farnesyltransferase (Nocardioides sp. (strain ATCC BAA-499 / JS614)).